Reading from the N-terminus, the 78-residue chain is Delta-conotoxin TxVIA (78 aa).

Residues 1 to 22 form the signal peptide; that stretch reads MKLTCMMIVAVLFLTAWTFATA. A propeptide spanning residues 23 to 49 is cleaved from the precursor; the sequence is DDPRNGLGNLFSNAHHEMKNPEASKLN. 3 cysteine pairs are disulfide-bonded: Cys53–Cys68, Cys60–Cys72, and Cys67–Cys77. Residue Met59 is modified to Methionine sulfoxide; partial.

It belongs to the conotoxin O1 superfamily. Expressed by the venom duct.

The protein localises to the secreted. Delta-conotoxins bind to site 6 of voltage-gated sodium channels (Nav) and inhibit the inactivation process. Binding of this toxin is strongly calcium-dependent but not voltage-dependent. The binding site is most likely on the extracellular side of the sodium channel. Binds receptor sites on both mollusk and rat central nervous system, but despite its high affinity binding to rat sodium channel, it has no functional effect in vivo and in vitro on it. Also has no effect on Gambusia fish. Is important in mollusk for the paralysis of the prey. Upon injection of the peptide, a subordinate lobster assumes an exaggerated dominant posture (of a 'King-Kong' lobster!). The sequence is that of Delta-conotoxin TxVIA from Conus textile (Cloth-of-gold cone).